The primary structure comprises 136 residues: C-type natriuretic peptide prohormone (136 aa).

A signal peptide spans 1-21; the sequence is MSGQTSFYCGLLLVLLIQAQA. The cysteines at positions 120 and 136 are disulfide-linked.

It belongs to the natriuretic peptide family. In terms of tissue distribution, CNP-115 is differentially processed to produce CNP-38 and CNP-39 in the heart and CNP-22 in the brain.

The protein localises to the secreted. In terms of biological role, hormone which may be vasoactive and natriuretic. Has a cGMP-stimulating activity. The sequence is that of C-type natriuretic peptide prohormone from Triakis scyllium (Banded houndshark).